A 341-amino-acid chain; its full sequence is tRNA N6-adenosine threonylcarbamoyltransferase (341 aa).

Residues His-111 and His-115 each coordinate Fe cation. Substrate contacts are provided by residues 134 to 138, Asp-167, Gly-180, and Asn-276; that span reads LVSGG. Asp-304 contacts Fe cation.

It belongs to the KAE1 / TsaD family. Fe(2+) is required as a cofactor.

The protein resides in the cytoplasm. It catalyses the reaction L-threonylcarbamoyladenylate + adenosine(37) in tRNA = N(6)-L-threonylcarbamoyladenosine(37) in tRNA + AMP + H(+). Functionally, required for the formation of a threonylcarbamoyl group on adenosine at position 37 (t(6)A37) in tRNAs that read codons beginning with adenine. Is involved in the transfer of the threonylcarbamoyl moiety of threonylcarbamoyl-AMP (TC-AMP) to the N6 group of A37, together with TsaE and TsaB. TsaD likely plays a direct catalytic role in this reaction. The sequence is that of tRNA N6-adenosine threonylcarbamoyltransferase from Pseudomonas syringae pv. syringae (strain B728a).